Here is a 506-residue protein sequence, read N- to C-terminus: MPTLYTDIEIPQLKISLKQPLGLFINNEFCPSSDGKTIETVNPATGEPITSFQAANEKDVDKAVKAARAAFDNVWSKTSSEQRGIYLSNLLKLIEEEQDTLAALETLDAGKPYHSNAKGDLAQILQLTRYFAGSADKFDKGATIPLTFNKFAYTLKVPFGVVAQIVPWNYPLAMACWKLQGALAAGNTVIIKPAENTSLSLLYFATLIKKAGFPPGVVNIVPGYGSLVGQALASHMDIDKISFTGSTKVGGFVLEASGQSNLKDVTLECGGKSPALVFEDADLDKAIDWIAAGIFYNSGQNCTANSRVYVQSSIYDKFVEKFKETAKKEWDVAGKFDPFDEKCIVGPVISSTQYDRIKSYIERGKREEKLDMFQTSEFPIGGAKGYFIPPTIFTDVPQTSKLLQDEIFGPVVVVSKFTNYDDALKLANDTCYGLASAVFTKDVKKAHMFARDIKAGTVWINSSNDEDVTVPFGGFKMSGIGRELGQSGVDTYLQTKAVHINLSLDN.

E268 (proton acceptor) is an active-site residue. The active-site Nucleophile is the C302.

The protein belongs to the aldehyde dehydrogenase family.

It localises to the cytoplasm. The enzyme catalyses an aldehyde + NAD(+) + H2O = a carboxylate + NADH + 2 H(+). It catalyses the reaction 3-aminopropanal + NAD(+) + H2O = beta-alanine + NADH + 2 H(+). In terms of biological role, cytoplasmic aldehyde dehydrogenase involved in ethanol oxidation. Required for pantothenic acid production through the conversion of 3-aminopropanal to beta-alanine, an intermediate in pantothenic acid (vitamin B5) and coenzyme A (CoA) biosynthesis. The protein is Aldehyde dehydrogenase [NAD(P)+] 1 (ALD2) of Saccharomyces cerevisiae (strain ATCC 204508 / S288c) (Baker's yeast).